The following is a 627-amino-acid chain: DEAD-box ATP-dependent RNA helicase 35A (627 aa).

Composition is skewed to low complexity over residues 1 to 15 (MAAA…AAAA) and 52 to 61 (SSSAAEAASD). 2 disordered regions span residues 1–23 (MAAA…EDNY) and 40–85 (LRRL…LEAS). Residues 62–72 (LPPPPPPPPNQ) are compositionally biased toward pro residues. The short motif at 182 to 210 (RDFRDLRLPEPMLRKLREKGIVQPTPIQV) is the Q motif element. In terms of domain architecture, Helicase ATP-binding spans 213–397 (LPVVLSGRDM…KSALVKPVIV (185 aa)). 226 to 233 (AFTGSGKT) is a binding site for ATP. The short motif at 345–348 (DEAD) is the DEAD box element. Positions 408 to 568 (DVIQEVEYVK…RIPPVLAELN (161 aa)) constitute a Helicase C-terminal domain. The CCHC-type zinc finger occupies 584–601 (KGCAYCGGLGHRVTDCPK).

This sequence belongs to the DEAD box helicase family. DDX41 subfamily.

The enzyme catalyses ATP + H2O = ADP + phosphate + H(+). The polypeptide is DEAD-box ATP-dependent RNA helicase 35A (Oryza sativa subsp. japonica (Rice)).